The chain runs to 207 residues: Sodium/potassium-transporting ATPase subunit beta-1-interacting protein 1 (207 aa).

Transmembrane regions (helical) follow at residues 2–22, 35–55, and 62–82; these read GKCS…VAAL, APIL…FGTV, and LILY…IICF. The N-linked (GlcNAc...) asparagine glycan is linked to asparagine 100. Residues 147–167 traverse the membrane as a helical segment; that stretch reads ALSSALQIFLALFGFVFACYV.

It belongs to the NKAIN family. As to quaternary structure, interacts with ATP1B1 C-terminus. In terms of tissue distribution, detected in the brain only and specifically in neurons. Expressed in multiple regions such as cerebral cortex, thalamus, hippocampus, olfactory bulb and brainstem as well as in cerebellum with high expression in granular cell layer.

Its subcellular location is the cell membrane. The polypeptide is Sodium/potassium-transporting ATPase subunit beta-1-interacting protein 1 (Nkain1) (Mus musculus (Mouse)).